Reading from the N-terminus, the 761-residue chain is MIVKCPICDGTGKKVVKYKTCPVCEGTGFIDEFSPKQHMKRVSKRATYDLDYGEIPCPKCKGTGKVPVYAKCDFCGGSGKVVKCDRCGAIIGKYPDFKDRTLCDKCLKEEEERKKGLRNVYVFDELATFYDVEPGKFYKGVVTRIEKYGAFINLNEQVRGLLRPRDMISLRLENLNVGDEIIVQAIDVRPEKREIDFKYIPLTTYDLVKYEKEVPLSQIKDISQNLVEMRDQVVHIRGEVVQIVQTPGPTVFTITDGTDFAWVAALEIAGLRAHPDVKVGDIVDVIGRVTIRDGRLQIERIKLQKLEGDEAEEIRKKIEEEIDRRAEPAKDIPFLVKSEVLERLRPKMADVAKRIRKAVLDGRPIIIRHHADTDGYCGGIALEKAILPIIDKFAIDVDAIWHFFKRRPSKAPFYELEDVTKDLVFSIEDALKFGQKLPLIVLIDNGSTDEDIPAISKAKAYGIEVIVIDHHFPGEVVDGKVEVDDYVDAHVNPYLVGGDSNLTAGVLGTEIARMINPDVEDEIKHIPGIAVVGDHAKGEEAEQYVKIALDRLNELSKKYGKGRTYDREYLEKIALCMDFEAFYLRFMDGKGIVDDILATNIKEFGRHEELIDILYEQAMKMVERQMKAVIPALKTEFLENGIILNTLDVEKYAHKFTFPAPGKTTGFAHDYIVQKYGEDKPIITLSYGPDFGVVRATDAVHEKYNFNLNLIVEQLMEEIPEASLDGGGHECAGSLKFVEGLRDKVIGRFIEIIKNMKPKEQ.

The CR-type zinc finger occupies 1–84; the sequence is MIVKCPICDG…CGGSGKVVKC (84 aa). The S1 motif domain occupies 135–200; sequence GKFYKGVVTR…EKREIDFKYI (66 aa).

This is an uncharacterized protein from Methanocaldococcus jannaschii (strain ATCC 43067 / DSM 2661 / JAL-1 / JCM 10045 / NBRC 100440) (Methanococcus jannaschii).